The primary structure comprises 240 residues: Lysoplasmalogenase TMEM86A (240 aa).

The Cytoplasmic segment spans residues 1-21 (MVSPVTVVKSEGPKLVPFFKA). Residues 22–42 (TCVYFVLWLPSSSPSWVSALI) traverse the membrane as a helical segment. Residue K43 is a topological domain, extracellular. A helical transmembrane segment spans residues 44–64 (CLPIFCLWLFLLAHGLGFLLT). Over 65 to 70 (HPSATR) the chain is Cytoplasmic. A helical transmembrane segment spans residues 71–91 (IFVGLVFSAIGDAFLIWQDQG). A topological domain (extracellular) is located at residue Y92. The chain crosses the membrane as a helical span at residues 93-113 (FVHGMLMFAVTHMLYASAFGM). The Cytoplasmic segment spans residues 114 to 115 (RP). Residues 116–136 (LGLRTGLLMVILSGLCYAFLY) form a helical membrane-spanning segment. Topologically, residues 137–138 (PN) are extracellular. The helical transmembrane segment at 139-159 (LTGAFTYVVGVYVAIIGFMGW) threads the bilayer. The Cytoplasmic portion of the chain corresponds to 160-174 (RAMAGLQLVGAAWRW). A helical transmembrane segment spans residues 175-195 (TELAAGTGALLFIVSDLTIAL). Topologically, residues 196 to 206 (DKFCFPVPYSR) are extracellular. Residues 207 to 227 (ALIMSTYYAAQMLIALSAVES) form a helical membrane-spanning segment. At 228-240 (REPVEDYRLSKAK) the chain is on the cytoplasmic side.

The protein belongs to the TMEM86 family.

It is found in the endoplasmic reticulum membrane. The catalysed reaction is a 1-O-(1Z-alkenyl)-sn-glycero-3-phosphocholine + H2O = a 2,3-saturated aldehyde + sn-glycerol 3-phosphocholine. The enzyme catalyses a 1-O-(1Z-alkenyl)-sn-glycero-3-phosphoethanolamine + H2O = a 2,3-saturated aldehyde + sn-glycero-3-phosphoethanolamine. In terms of biological role, catalyzes the hydrolysis of the vinyl ether bond of choline or ethanolamine lysoplasmalogens, forming fatty aldehyde and glycerophosphocholine or glycerophosphoethanolamine, respectively and is specific for the sn-2-deacylated (lyso) form of plasmalogen. Plays an important role in lysoplasmalogen metabolism in the adipocyte tissue and macrophages. The protein is Lysoplasmalogenase TMEM86A (TMEM86A) of Bos taurus (Bovine).